A 552-amino-acid chain; its full sequence is Cation/acetate symporter ActP (552 aa).

The next 14 membrane-spanning stretches (helical) occupy residues 6-26 (LLAV…AIAG), 35-55 (MEAI…TYWA), 78-98 (GLAM…SALV), 103-123 (FDGL…LFLI), 151-171 (LSAC…MVGA), 185-205 (VAVV…GMLA), 208-228 (WVQI…AIMV), 264-284 (ISAL…PHIL), 305-325 (GLMG…ILLV), 357-377 (LFLG…VAGL), 407-427 (VSKI…ILFE), 431-451 (IAFM…PIIL), 467-487 (GGWL…TIWV), and 496-516 (IFPY…GTWL).

It belongs to the sodium:solute symporter (SSF) (TC 2.A.21) family.

It localises to the cell inner membrane. Functionally, transports acetate. The chain is Cation/acetate symporter ActP from Erwinia tasmaniensis (strain DSM 17950 / CFBP 7177 / CIP 109463 / NCPPB 4357 / Et1/99).